Here is a 180-residue protein sequence, read N- to C-terminus: Ribulose bisphosphate carboxylase small subunit, chloroplastic (180 aa).

A chloroplast-targeting transit peptide spans 1–56 (MASSVLSSAAVATRSNVAQANMVAPFTGLKSAASFPVSRKQNLDITSIASNGGRVQ).

It belongs to the RuBisCO small chain family. Heterohexadecamer of 8 large and 8 small subunits. As to quaternary structure, (Microbial infection) Binds to tobamovirus movement protein at the plasmodesmata (e.g. tomato mosaic virus MP AC P69513); this interaction seems required for viral systemic movement.

The protein resides in the plastid. The protein localises to the chloroplast. It localises to the cell junction. Its subcellular location is the plasmodesma. Its function is as follows. RuBisCO catalyzes two reactions: the carboxylation of D-ribulose 1,5-bisphosphate, the primary event in carbon dioxide fixation, as well as the oxidative fragmentation of the pentose substrate. Both reactions occur simultaneously and in competition at the same active site. Although the small subunit is not catalytic it is essential for maximal activity. Involved in antiviral defenses. (Microbial infection) Required for tobamovirus movement (e.g. tobacco mosaic virus (TMV)). The chain is Ribulose bisphosphate carboxylase small subunit, chloroplastic from Nicotiana benthamiana.